Here is a 351-residue protein sequence, read N- to C-terminus: Holliday junction branch migration complex subunit RuvB (351 aa).

The tract at residues 4–199 is large ATPase domain (RuvB-L); sequence DNPQFNQWYE…FGIINSLQYY (196 aa). ATP contacts are provided by residues Leu-38, Arg-39, Gly-80, Lys-83, Thr-84, Thr-85, 146–148, Arg-189, Tyr-199, and Arg-236; that span reads EDY. Residue Thr-84 coordinates Mg(2+). Residues 200-270 are small ATPAse domain (RuvB-S); that stretch reads TPEELQQIVV…IVTIGLDKLR (71 aa). The head domain (RuvB-H) stretch occupies residues 273–351; sequence NRGLDETDHK…HLGHAYQRKL (79 aa). The DNA site is built by Arg-328 and Arg-333.

This sequence belongs to the RuvB family. In terms of assembly, homohexamer. Forms an RuvA(8)-RuvB(12)-Holliday junction (HJ) complex. HJ DNA is sandwiched between 2 RuvA tetramers; dsDNA enters through RuvA and exits via RuvB. An RuvB hexamer assembles on each DNA strand where it exits the tetramer. Each RuvB hexamer is contacted by two RuvA subunits (via domain III) on 2 adjacent RuvB subunits; this complex drives branch migration. In the full resolvosome a probable DNA-RuvA(4)-RuvB(12)-RuvC(2) complex forms which resolves the HJ.

Its subcellular location is the cytoplasm. It catalyses the reaction ATP + H2O = ADP + phosphate + H(+). The RuvA-RuvB-RuvC complex processes Holliday junction (HJ) DNA during genetic recombination and DNA repair, while the RuvA-RuvB complex plays an important role in the rescue of blocked DNA replication forks via replication fork reversal (RFR). RuvA specifically binds to HJ cruciform DNA, conferring on it an open structure. The RuvB hexamer acts as an ATP-dependent pump, pulling dsDNA into and through the RuvAB complex. RuvB forms 2 homohexamers on either side of HJ DNA bound by 1 or 2 RuvA tetramers; 4 subunits per hexamer contact DNA at a time. Coordinated motions by a converter formed by DNA-disengaged RuvB subunits stimulates ATP hydrolysis and nucleotide exchange. Immobilization of the converter enables RuvB to convert the ATP-contained energy into a lever motion, pulling 2 nucleotides of DNA out of the RuvA tetramer per ATP hydrolyzed, thus driving DNA branch migration. The RuvB motors rotate together with the DNA substrate, which together with the progressing nucleotide cycle form the mechanistic basis for DNA recombination by continuous HJ branch migration. Branch migration allows RuvC to scan DNA until it finds its consensus sequence, where it cleaves and resolves cruciform DNA. The sequence is that of Holliday junction branch migration complex subunit RuvB from Leuconostoc mesenteroides subsp. mesenteroides (strain ATCC 8293 / DSM 20343 / BCRC 11652 / CCM 1803 / JCM 6124 / NCDO 523 / NBRC 100496 / NCIMB 8023 / NCTC 12954 / NRRL B-1118 / 37Y).